Here is a 608-residue protein sequence, read N- to C-terminus: MDYRALGLKVGLEIHIQLNTRRKLFCHCPPVLRDDEPHFRLERRLHISLSELGAVDPAVVWEVRKRRRYVYEGYRDTTCLVELDEEPPHLPDEEALVTALGVAKMFNAKPFDELHVMRKIVVDGSNVSGFQRTVLVAYGGRAKILGYDIGVETIALEEDAARKMGEEGKAVIYRLDRLGIPLIEIATEPMSYSPQQVEEVAWIIGYSVKITGRAKRGVGTVRQDVNVSIAGGAKTEIKGVPDLSLIPKVIEYEAQRQVNLLKIAEELKKRGVASVELSTVDVTDVFSNTKSKLVKRVLEAGGRVVAVKAPGFRKLLGFEVQPGRRFGTELADYVRAWTELGGLLHSDELPGYGISADEVRAVEQRVGVDSYVLLMGVEAAELEEAARVVVDRLNAALRGVPEETRGANPDGTTRFLRPRPGAARMYPETDLPPIKVTFELLKRAEEVAKVSLEGKIAELTSMGLSKDLALRLVKSPHLEKFEEFVARFKSLPPQLIASIMLNTAKALAREGVEVSEEKLASVFEALENKVITKEAVEDVLRAMKPGESAAEVAKRLGLVRLPFEEVRKIVEEVAKEVGREKALGEVMRRYRGRVDAEDVRRALSELHF.

Positions 402-422 (EETRGANPDGTTRFLRPRPGA) are disordered.

It belongs to the GatB/GatE family. GatE subfamily. In terms of assembly, heterodimer of GatD and GatE.

It catalyses the reaction L-glutamyl-tRNA(Gln) + L-glutamine + ATP + H2O = L-glutaminyl-tRNA(Gln) + L-glutamate + ADP + phosphate + H(+). Functionally, allows the formation of correctly charged Gln-tRNA(Gln) through the transamidation of misacylated Glu-tRNA(Gln) in organisms which lack glutaminyl-tRNA synthetase. The reaction takes place in the presence of glutamine and ATP through an activated gamma-phospho-Glu-tRNA(Gln). The GatDE system is specific for glutamate and does not act on aspartate. This Pyrobaculum calidifontis (strain DSM 21063 / JCM 11548 / VA1) protein is Glutamyl-tRNA(Gln) amidotransferase subunit E.